Reading from the N-terminus, the 91-residue chain is Small ribosomal subunit protein uS19 (91 aa).

Belongs to the universal ribosomal protein uS19 family.

Its function is as follows. Protein S19 forms a complex with S13 that binds strongly to the 16S ribosomal RNA. In Neorickettsia sennetsu (strain ATCC VR-367 / Miyayama) (Ehrlichia sennetsu), this protein is Small ribosomal subunit protein uS19.